Reading from the N-terminus, the 519-residue chain is AarF domain-containing protein kinase 1 (519 aa).

The Protein kinase domain maps to 145-481 (SFEDTPLGAA…SLYRRVHISL (337 aa)). Residues 151 to 159 (LGAASLAQV) and Lys-173 each bind ATP. The Proton acceptor role is filled by Asp-305.

The protein belongs to the protein kinase superfamily. ADCK protein kinase family.

It is found in the mitochondrion. In terms of biological role, appears to be essential for maintaining mitochondrial cristae formation and mitochondrial function by acting via YME1L1 in a kinase-independent manner to regulate essential mitochondrial structural proteins OPA1 and IMMT. The action of this enzyme is not yet clear. It is not known if it has protein kinase activity and what type of substrate it would phosphorylate (Ser, Thr or Tyr). This chain is AarF domain-containing protein kinase 1 (ADCK1), found in Gallus gallus (Chicken).